A 288-amino-acid chain; its full sequence is MHTIKTVLLLGVLTGLFLLAGKIIGGQTGMIIAFFFAMAMNFFAYWFSDKMALKMYRAQEIPYEEAPWLHDMVAELARNAGIPKPRIYLAPTEIPNAFATGRNPKNAVVAVTSGILNILSPEELRGVLAHEIAHIKNRDILISSIAATIGGAISMLAEMAFWSNIFGGNDEDNGIGGLIGSLLLFILAPIAAMIIQMAISRSREYAADATGAEICRCPLSLAKALEKLEMAAHQLAPVAAREVNPGTAHMMIVNPLKGSSIASLFSTHPPTEERIRRLYEMARRMGSV.

The next 2 helical transmembrane spans lie at 1 to 21 (MHTIKTVLLLGVLTGLFLLAG) and 23 to 43 (IIGGQTGMIIAFFFAMAMNFF). Position 130 (His130) interacts with Zn(2+). The active site involves Glu131. Position 134 (His134) interacts with Zn(2+). Transmembrane regions (helical) follow at residues 140 to 160 (ILISSIAATIGGAISMLAEMA) and 175 to 195 (IGGLIGSLLLFILAPIAAMII). A Zn(2+)-binding site is contributed by Glu204.

This sequence belongs to the peptidase M48B family. Zn(2+) is required as a cofactor.

It localises to the cell inner membrane. This is Protease HtpX homolog from Persephonella marina (strain DSM 14350 / EX-H1).